The primary structure comprises 523 residues: Dynein regulatory complex subunit 3 (523 aa).

LRR repeat units lie at residues 44–65, 66–87, 88–109, 110–131, and 132–153; these read DVLS…WQFE, NLRK…ENLA, HLVW…DTLV, NLED…DALV, and KLQV…IYLR. In terms of domain architecture, LRRCT spans 166 to 204; it reads NPISEAEDYKMFICAYLPDLMYLDYRRIDDHTKKLAEAK. Coiled coils occupy residues 208–242 and 366–391; these read SIDE…AFVE and MTLE…VDMV.

It belongs to the DRC3 family. As to quaternary structure, component of the nexin-dynein regulatory complex (N-DRC). Interacts with DRC1. Interacts with TCTE1/DRC5. Interacts with DRC7.

Its subcellular location is the cytoplasm. It localises to the cytoskeleton. The protein resides in the cilium axoneme. It is found in the cell projection. The protein localises to the cilium. Its subcellular location is the flagellum axoneme. It localises to the flagellum. Its function is as follows. Component of the nexin-dynein regulatory complex (N-DRC) a key regulator of ciliary/flagellar motility which maintains the alignment and integrity of the distal axoneme and regulates microtubule sliding in motile axonemes. The protein is Dynein regulatory complex subunit 3 (DRC3) of Homo sapiens (Human).